The chain runs to 488 residues: Multidrug resistance outer membrane protein MdtP (488 aa).

The N-terminal stretch at 1 to 23 is a signal peptide; it reads MINRQLSRLLLCSILGSTTLISG. Cysteine 24 is lipidated: N-palmitoyl cysteine. Cysteine 24 carries S-diacylglycerol cysteine lipidation.

The protein belongs to the outer membrane factor (OMF) (TC 1.B.17) family. Could be part of a tripartite efflux system composed of MdtN, MdtO and MdtP.

It localises to the cell outer membrane. Its function is as follows. Could be involved in resistance to puromycin, acriflavine and tetraphenylarsonium chloride. This Escherichia coli (strain K12) protein is Multidrug resistance outer membrane protein MdtP (mdtP).